A 215-amino-acid polypeptide reads, in one-letter code: MEIPAIQTEREDITSEKMAQINPLPVPLGPWKITVYDQENFQGKRMEFTSSCANIMECGFDNIRSLKVECGAWIGYEHTSFCGQQFVLERGEYPRWDAWSGSNAYHIERLMSFRPICSANHEESKLVIFEKENFIGRQRELCDDYPSLQAMGWGNNEVGSMKVQCGAWVCYQYPGYRGYQYILESDHHGGEYKHWREWGSHAQTFQIQSIRRIQQ.

Residues 1–30 are N-terminal arm; sequence MEIPAIQTEREDITSEKMAQINPLPVPLGP. 2 Beta/gamma crystallin 'Greek key' domains span residues 31-70 and 71-117; these read WKIT…KVEC and GAWI…RPIC. A connecting peptide region spans residues 118–123; that stretch reads SANHEE. 2 consecutive Beta/gamma crystallin 'Greek key' domains span residues 124-165 and 166-214; these read SKLV…KVQC and GAWV…RRIQ.

It belongs to the beta/gamma-crystallin family. In terms of assembly, homo/heterodimer, or complexes of higher-order. The structure of beta-crystallin oligomers seems to be stabilized through interactions between the N-terminal arms. Post-translationally, the N-terminus is blocked.

Functionally, crystallins are the dominant structural components of the vertebrate eye lens. The polypeptide is Beta-crystallin A3-2 (Aquarana catesbeiana (American bullfrog)).